Reading from the N-terminus, the 191-residue chain is ADP-ribosylation factor (191 aa).

Gly-2 is lipidated: N-myristoyl glycine. GTP is bound by residues 24–31 (GLDAAGKT), 67–71 (DVGGQ), and 128–131 (NKQD).

This sequence belongs to the small GTPase superfamily. Arf family.

Its subcellular location is the golgi apparatus. Its function is as follows. GTP-binding protein involved in protein trafficking; may modulate vesicle budding and uncoating within the Golgi apparatus. The chain is ADP-ribosylation factor from Giardia intestinalis (Giardia lamblia).